The following is a 201-amino-acid chain: Small ribosomal subunit protein uS4 (201 aa).

The interval 1–45 (MARYTGPLTKKSRRLGTDLVGNDKSFERRPYPPGVHGRGRTKDSE) is disordered. Residues 91-157 (SRLDNVVYRA…PPIVIARETF (67 aa)) form the S4 RNA-binding domain.

It belongs to the universal ribosomal protein uS4 family. In terms of assembly, part of the 30S ribosomal subunit. Contacts protein S5. The interaction surface between S4 and S5 is involved in control of translational fidelity.

One of the primary rRNA binding proteins, it binds directly to 16S rRNA where it nucleates assembly of the body of the 30S subunit. Its function is as follows. With S5 and S12 plays an important role in translational accuracy. The polypeptide is Small ribosomal subunit protein uS4 (Cutibacterium acnes (strain DSM 16379 / KPA171202) (Propionibacterium acnes)).